The following is a 727-amino-acid chain: Catalase-peroxidase (727 aa).

The segment at residues Trp-95–Tyr-218 is a cross-link (tryptophyl-tyrosyl-methioninium (Trp-Tyr) (with M-244)). His-96 serves as the catalytic Proton acceptor. The segment at residues Tyr-218–Met-244 is a cross-link (tryptophyl-tyrosyl-methioninium (Tyr-Met) (with W-95)). Residue His-259 participates in heme b binding.

The protein belongs to the peroxidase family. Peroxidase/catalase subfamily. In terms of assembly, homodimer or homotetramer. The cofactor is heme b. Post-translationally, formation of the three residue Trp-Tyr-Met cross-link is important for the catalase, but not the peroxidase activity of the enzyme.

It catalyses the reaction H2O2 + AH2 = A + 2 H2O. It carries out the reaction 2 H2O2 = O2 + 2 H2O. Its function is as follows. Bifunctional enzyme with both catalase and broad-spectrum peroxidase activity. This chain is Catalase-peroxidase, found in Persephonella marina (strain DSM 14350 / EX-H1).